We begin with the raw amino-acid sequence, 283 residues long: MTDSQITAQILTESLKYFLKYRDQTVVIKYGGNVMIDEKVKESILKDILLLKTVGIKVVLVHGGGPAIGELLEKYEQKSQFVKGLRVTNKKTAQLALTALAGKVNKSLVQDIIRLGGNAIGVSGIDGKLIEAKPISEDLGYVGEITAIHPEIIERINQTDAVPVIASAAIGLDGEIYNVNADTAASRIAGSLCAEQFILLSDVRGLYGNFPDEGSFIDEINLTNLEKLVKEKKITDGMIPKIEAIKYAMQEGLGQAVLLDGRVPHALLLELFTDRGQGTLINH.

Substrate is bound by residues 64 to 65, Arg86, and Asn178; that span reads GG.

It belongs to the acetylglutamate kinase family. ArgB subfamily.

It localises to the cytoplasm. It catalyses the reaction N-acetyl-L-glutamate + ATP = N-acetyl-L-glutamyl 5-phosphate + ADP. The protein operates within amino-acid biosynthesis; L-arginine biosynthesis; N(2)-acetyl-L-ornithine from L-glutamate: step 2/4. Functionally, catalyzes the ATP-dependent phosphorylation of N-acetyl-L-glutamate. The sequence is that of Acetylglutamate kinase from Lactococcus lactis subsp. cremoris (strain SK11).